The chain runs to 246 residues: uncharacterized protein (246 aa).

Disordered regions lie at residues 9 to 125 (CSRV…GAMA) and 155 to 203 (QPVR…EEKA). Residues 27-37 (GTRRQRQRPRQ) show a composition bias toward basic residues. Pro residues-rich tracts occupy residues 54–64 (PRPPTGPPARY) and 101–117 (EPRP…PPGS). The span at 161–176 (KLPKGKGRLRRPRQSR) shows a compositional bias: basic residues. Thr179 carries the phosphothreonine modification. Phosphoserine is present on residues Ser196, Ser210, and Ser220.

The protein resides in the cytoplasm. This is an uncharacterized protein from Mus musculus (Mouse).